Consider the following 408-residue polypeptide: Argininosuccinate synthase (408 aa).

Residues 12–20 (AYSGGLDTS) and alanine 39 contribute to the ATP site. L-citrulline is bound by residues tyrosine 92 and serine 97. Residue glycine 122 participates in ATP binding. L-aspartate-binding residues include threonine 124, asparagine 128, and aspartate 129. Asparagine 128 lines the L-citrulline pocket. Arginine 132, serine 183, serine 192, glutamate 268, and tyrosine 280 together coordinate L-citrulline.

This sequence belongs to the argininosuccinate synthase family. Type 1 subfamily. Homotetramer.

The protein localises to the cytoplasm. The catalysed reaction is L-citrulline + L-aspartate + ATP = 2-(N(omega)-L-arginino)succinate + AMP + diphosphate + H(+). Its pathway is amino-acid biosynthesis; L-arginine biosynthesis; L-arginine from L-ornithine and carbamoyl phosphate: step 2/3. This Caulobacter vibrioides (strain ATCC 19089 / CIP 103742 / CB 15) (Caulobacter crescentus) protein is Argininosuccinate synthase.